The following is a 458-amino-acid chain: tRNA modification GTPase MnmE (458 aa).

(6S)-5-formyl-5,6,7,8-tetrahydrofolate contacts are provided by Arg23, Glu80, and Lys122. Residues 218 to 380 enclose the TrmE-type G domain; it reads GMKIVIAGRP…LREHLQQTMG (163 aa). Asn228 serves as a coordination point for K(+). GTP is bound by residues 228 to 233, 247 to 253, 272 to 275, and 361 to 363; these read NVGKSS, TQIPGTT, DTAG, and SAR. A Mg(2+)-binding site is contributed by Ser232. Thr247, Ile249, and Thr252 together coordinate K(+). Thr253 contacts Mg(2+). Lys458 is a (6S)-5-formyl-5,6,7,8-tetrahydrofolate binding site.

It belongs to the TRAFAC class TrmE-Era-EngA-EngB-Septin-like GTPase superfamily. TrmE GTPase family. Homodimer. Heterotetramer of two MnmE and two MnmG subunits. K(+) is required as a cofactor.

It localises to the cytoplasm. Exhibits a very high intrinsic GTPase hydrolysis rate. Involved in the addition of a carboxymethylaminomethyl (cmnm) group at the wobble position (U34) of certain tRNAs, forming tRNA-cmnm(5)s(2)U34. The polypeptide is tRNA modification GTPase MnmE (Hamiltonella defensa subsp. Acyrthosiphon pisum (strain 5AT)).